The following is a 501-amino-acid chain: Ribose import ATP-binding protein RbsA (501 aa).

ABC transporter domains lie at Leu6–Lys242 and Val253–Lys495. Gly38–Ser45 contacts ATP.

This sequence belongs to the ABC transporter superfamily. Ribose importer (TC 3.A.1.2.1) family. In terms of assembly, the complex is composed of an ATP-binding protein (RbsA), two transmembrane proteins (RbsC) and a solute-binding protein (RbsB).

It is found in the cell inner membrane. It catalyses the reaction D-ribose(out) + ATP + H2O = D-ribose(in) + ADP + phosphate + H(+). In terms of biological role, part of the ABC transporter complex RbsABC involved in ribose import. Responsible for energy coupling to the transport system. This is Ribose import ATP-binding protein RbsA from Vibrio vulnificus (strain CMCP6).